The sequence spans 172 residues: Adenylate kinase isoenzyme 6 (172 aa).

Residues G13, G15, K16, T17, and T18 each contribute to the ATP site. The NMPbind stretch occupies residues 33–56; the sequence is NVGDLAREGQLYDGYDEEYGCPIL. The LID stretch occupies residues 108–118; that stretch reads TRGYNEKKLQD. ATP is bound at residue R109.

Belongs to the adenylate kinase family. AK6 subfamily. In terms of assembly, monomer and homodimer. Interacts with small ribosomal subunit protein uS11. Not a structural component of 43S pre-ribosomes, but transiently interacts with them by binding to uS11. Interacts with COIL (via C-terminus).

Its subcellular location is the cytoplasm. The protein localises to the nucleus. The protein resides in the nucleoplasm. It localises to the cajal body. The enzyme catalyses AMP + ATP = 2 ADP. The catalysed reaction is ATP + H2O = ADP + phosphate + H(+). Broad-specificity nucleoside monophosphate (NMP) kinase that catalyzes the reversible transfer of the terminal phosphate group between nucleoside triphosphates and monophosphates. Also has ATPase activity. Involved in the late cytoplasmic maturation steps of the 40S ribosomal particles, specifically 18S rRNA maturation. While NMP activity is not required for ribosome maturation, ATPase activity is. Associates transiently with small ribosomal subunit protein uS11. ATP hydrolysis breaks the interaction with uS11. May temporarily remove uS11 from the ribosome to enable a conformational change of the ribosomal RNA that is needed for the final maturation step of the small ribosomal subunit. Its NMP activity may have a role in nuclear energy homeostasis. May be involved in regulation of Cajal body (CB) formation. The chain is Adenylate kinase isoenzyme 6 from Mus musculus (Mouse).